Here is a 422-residue protein sequence, read N- to C-terminus: Tyrosine--tRNA ligase 1 (422 aa).

Y35 provides a ligand contact to L-tyrosine. The short motif at 40–49 (PTADSLHIGH) is the 'HIGH' region element. L-tyrosine-binding residues include Y170 and Q174. Residues 232 to 236 (KFGKT) carry the 'KMSKS' region motif. ATP is bound at residue K235. Residues 355 to 421 (LSLVDVLVQS…GKKKYFLVTY (67 aa)) form the S4 RNA-binding domain.

It belongs to the class-I aminoacyl-tRNA synthetase family. TyrS type 1 subfamily. In terms of assembly, homodimer.

The protein resides in the cytoplasm. It catalyses the reaction tRNA(Tyr) + L-tyrosine + ATP = L-tyrosyl-tRNA(Tyr) + AMP + diphosphate + H(+). Catalyzes the attachment of tyrosine to tRNA(Tyr) in a two-step reaction: tyrosine is first activated by ATP to form Tyr-AMP and then transferred to the acceptor end of tRNA(Tyr). The protein is Tyrosine--tRNA ligase 1 of Bacillus subtilis (strain 168).